A 358-amino-acid polypeptide reads, in one-letter code: uncharacterized protein (358 aa).

207-214 (AAVKDGKT) contacts ATP.

This is an uncharacterized protein from Bacillus subtilis (strain 168).